The sequence spans 188 residues: ATP synthase subunit b (188 aa).

A helical transmembrane segment spans residues 19–39 (VYVLGATIVSFLILFLFITYF).

This sequence belongs to the ATPase B chain family. In terms of assembly, F-type ATPases have 2 components, F(1) - the catalytic core - and F(0) - the membrane proton channel. F(1) has five subunits: alpha(3), beta(3), gamma(1), delta(1), epsilon(1). F(0) has three main subunits: a(1), b(2) and c(10-14). The alpha and beta chains form an alternating ring which encloses part of the gamma chain. F(1) is attached to F(0) by a central stalk formed by the gamma and epsilon chains, while a peripheral stalk is formed by the delta and b chains.

It localises to the cell membrane. Functionally, f(1)F(0) ATP synthase produces ATP from ADP in the presence of a proton or sodium gradient. F-type ATPases consist of two structural domains, F(1) containing the extramembraneous catalytic core and F(0) containing the membrane proton channel, linked together by a central stalk and a peripheral stalk. During catalysis, ATP synthesis in the catalytic domain of F(1) is coupled via a rotary mechanism of the central stalk subunits to proton translocation. Component of the F(0) channel, it forms part of the peripheral stalk, linking F(1) to F(0). The protein is ATP synthase subunit b of Mesomycoplasma hyopneumoniae (strain J / ATCC 25934 / NCTC 10110) (Mycoplasma hyopneumoniae).